A 289-amino-acid polypeptide reads, in one-letter code: Fumagillin beta-trans-bergamotene synthase af520 (289 aa).

A run of 6 helical transmembrane segments spans residues alanine 35–tryptophan 55, threonine 95–isoleucine 115, leucine 142–glycine 162, leucine 165–histidine 185, alanine 222–valine 242, and tyrosine 262–proline 282.

The protein belongs to the paxB family.

The protein resides in the membrane. It catalyses the reaction (2E,6E)-farnesyl diphosphate = (+)-exo-beta-bergamotene + diphosphate. It participates in secondary metabolite biosynthesis; terpenoid biosynthesis. Its function is as follows. Beta-trans-bergamotene synthase; part of the gene cluster that mediates the biosynthesis of fumagillin, a meroterpenoid that has numerous biological activities including irreversible inhibition of human type 2 methionine aminopeptidase (METAP2). Within the pathway, the membrane-bound fumagillin beta-trans-bergamotene synthase af520 converts farnesyl pyrophosphate (FPP) to beta-trans-bergamotene. The pathway begins with the conversion of FPP to beta-trans-bergamotene by af520. The multifunctional cytochrome P450 monooxygenase af510 then converts beta-trans-bergamotene into 5-keto-demethoxyfumagillol via several oxydation steps. 5-keto-demethoxyfumagillol is then subjected to successive C-6 hydroxylation and O-methylation by the dioxygenase af480 and O-methyltransferase af390-400, respectively, to yield 5-keto-fumagillol, which is then stereoselectively reduced by the keto-reductase af490 to 5R-hydroxy-seco-sesquiterpene. The next step is the polyketide transferase af380-catalyzed transfer of a dodecapentaenoyl group synthesized by the polyketide synthase af370 onto 5R-hydroxy-seco-sesquiterpene which leads to the production of prefumagillin. Finally, oxidative cleavage by the monooxygenase af470 converts prefumagillin to fumagillin. The protein is Fumagillin beta-trans-bergamotene synthase af520 of Aspergillus fumigatus (strain ATCC MYA-4609 / CBS 101355 / FGSC A1100 / Af293) (Neosartorya fumigata).